A 362-amino-acid chain; its full sequence is Terpene synthase 3 (362 aa).

Residues 90–95 (DDFLER) carry the DDxx(x)D/E motif motif. The short motif at 239–247 (NDCVSYAKE) is the NDxxSxxxD/E motif element.

It belongs to the terpene synthase family.

The catalysed reaction is (2E,6E)-farnesyl diphosphate = beta-maaliene + diphosphate. The enzyme catalyses (2E,6E)-farnesyl diphosphate = aristolene + diphosphate. It carries out the reaction (2E,6E)-farnesyl diphosphate = calarene + diphosphate. It catalyses the reaction (2E)-geranyl diphosphate = (E)-beta-ocimene + diphosphate. The catalysed reaction is (2E)-geranyl diphosphate = (Z)-beta-ocimene + diphosphate. The enzyme catalyses (2E)-geranyl diphosphate + H2O = linalool + diphosphate. It carries out the reaction (2E)-geranyl diphosphate = beta-myrcene + diphosphate. Terpene synthase that converts its substrate farnesyl diphosphate (FPP) into an unidentified sesquiterpene as a major product, as well as beta-maaliene, aristolene, calarene and 2 additional unidentified sesquiterpene as minor products. Is also able to convert geranyl diphosphate (GPP) into a mixture of monoterpenes including (Z)-beta-ocimene, (E)-beta-ocimene, allo-ocimene, linalool and beta-myrcene. This is Terpene synthase 3 from Dictyostelium discoideum (Social amoeba).